A 61-amino-acid chain; its full sequence is Large ribosomal subunit protein uL30 (61 aa).

The protein belongs to the universal ribosomal protein uL30 family. In terms of assembly, part of the 50S ribosomal subunit.

The sequence is that of Large ribosomal subunit protein uL30 from Dichelobacter nodosus (strain VCS1703A).